A 128-amino-acid polypeptide reads, in one-letter code: Ribonuclease P protein component (128 aa).

This sequence belongs to the RnpA family. As to quaternary structure, consists of a catalytic RNA component (M1 or rnpB) and a protein subunit.

It catalyses the reaction Endonucleolytic cleavage of RNA, removing 5'-extranucleotides from tRNA precursor.. In terms of biological role, RNaseP catalyzes the removal of the 5'-leader sequence from pre-tRNA to produce the mature 5'-terminus. It can also cleave other RNA substrates such as 4.5S RNA. The protein component plays an auxiliary but essential role in vivo by binding to the 5'-leader sequence and broadening the substrate specificity of the ribozyme. This Prochlorococcus marinus (strain MIT 9313) protein is Ribonuclease P protein component.